Reading from the N-terminus, the 263-residue chain is 3-deoxy-manno-octulosonate cytidylyltransferase (263 aa).

The protein belongs to the KdsB family.

It is found in the cytoplasm. The catalysed reaction is 3-deoxy-alpha-D-manno-oct-2-ulosonate + CTP = CMP-3-deoxy-beta-D-manno-octulosonate + diphosphate. Its pathway is nucleotide-sugar biosynthesis; CMP-3-deoxy-D-manno-octulosonate biosynthesis; CMP-3-deoxy-D-manno-octulosonate from 3-deoxy-D-manno-octulosonate and CTP: step 1/1. It participates in bacterial outer membrane biogenesis; lipopolysaccharide biosynthesis. Its function is as follows. Activates KDO (a required 8-carbon sugar) for incorporation into bacterial lipopolysaccharide in Gram-negative bacteria. This chain is 3-deoxy-manno-octulosonate cytidylyltransferase, found in Burkholderia mallei (strain NCTC 10229).